The primary structure comprises 150 residues: Lipoprotein signal peptidase (150 aa).

3 helical membrane-spanning segments follow: residues 8–28 (FYALVGFLVFLDQVTKYLAHA), 58–78 (GFSWLFFLLGIIALIFIGWFL), and 81–101 (TTGSIVFLALLQGGIAGNVFD). Residues D116 and D132 contribute to the active site. A helical transmembrane segment spans residues 126–146 (VVFNIADLFILAGVFGTFLFL).

The protein belongs to the peptidase A8 family.

Its subcellular location is the cell membrane. The enzyme catalyses Release of signal peptides from bacterial membrane prolipoproteins. Hydrolyzes -Xaa-Yaa-Zaa-|-(S,diacylglyceryl)Cys-, in which Xaa is hydrophobic (preferably Leu), and Yaa (Ala or Ser) and Zaa (Gly or Ala) have small, neutral side chains.. It functions in the pathway protein modification; lipoprotein biosynthesis (signal peptide cleavage). This protein specifically catalyzes the removal of signal peptides from prolipoproteins. In Tropheryma whipplei (strain TW08/27) (Whipple's bacillus), this protein is Lipoprotein signal peptidase.